We begin with the raw amino-acid sequence, 100 residues long: Class II hydrophobin FOXG_02746 (100 aa).

The N-terminal stretch at 1–17 (MQFYTIVSLFLAGTAYA) is a signal peptide. 4 disulfides stabilise this stretch: Cys-29/Cys-79, Cys-40/Cys-70, Cys-41/Cys-53, and Cys-80/Cys-92.

It belongs to the cerato-ulmin hydrophobin family. In terms of assembly, homodimer. Homodimers further self-assemble to form highly ordered films at water-air interfaces through intermolecular interactions.

Its subcellular location is the secreted. It is found in the cell wall. Aerial growth, conidiation, and dispersal of filamentous fungi in the environment rely upon a capability of their secreting small amphipathic proteins called hydrophobins (HPBs) with low sequence identity. Class I can self-assemble into an outermost layer of rodlet bundles on aerial cell surfaces, conferring cellular hydrophobicity that supports fungal growth, development and dispersal; whereas Class II form highly ordered films at water-air interfaces through intermolecular interactions but contribute nothing to the rodlet structure. FOXG_02746 is a class II hydrophobin that is likely required for plant colonization. The polypeptide is Class II hydrophobin FOXG_02746 (Fusarium oxysporum f. sp. lycopersici (strain 4287 / CBS 123668 / FGSC 9935 / NRRL 34936) (Fusarium vascular wilt of tomato)).